The following is a 123-amino-acid chain: Small ribosomal subunit protein uS11 (123 aa).

Residues 1–22 (MAKKRKKKLSSPEGISHIHASA) form a disordered region.

Belongs to the universal ribosomal protein uS11 family. As to quaternary structure, part of the 30S ribosomal subunit. Interacts with proteins S7 and S18. Binds to IF-3.

In terms of biological role, located on the platform of the 30S subunit, it bridges several disparate RNA helices of the 16S rRNA. Forms part of the Shine-Dalgarno cleft in the 70S ribosome. This is Small ribosomal subunit protein uS11 from Malacoplasma penetrans (strain HF-2) (Mycoplasma penetrans).